Here is a 511-residue protein sequence, read N- to C-terminus: Zinc finger CCCH-type with G patch domain-containing protein (511 aa).

Met-1 carries the N-acetylmethionine modification. A Phosphoserine modification is found at Ser-70. A disordered region spans residues 92–129 (PGAPCNDSETAPGSEVQPGSTSSALEEEEEDPDLEELS). Polar residues predominate over residues 98–115 (DSETAPGSEVQPGSTSSA). Acidic residues predominate over residues 116-127 (LEEEEEDPDLEE). Residues 174–200 (KSLKPCPFFLEGKCRFKENCRFSHGQV) form a C3H1-type zinc finger. A disordered region spans residues 266–291 (PPLRTEATESSDSDTGDASDSSYARV). The residue at position 276 (Ser-276) is a Phosphoserine. Thr-280 is modified (phosphothreonine). Residues 313 to 359 (TRGIGSKLLVKMGYEFGKGLGRHAEGRVEPIHAVVLPRGKSLDQCAE) form the G-patch domain. Residue Ser-353 is modified to Phosphoserine. Disordered regions lie at residues 363–393 (KKTK…PPRN) and 490–511 (AQEA…MTEF). Basic and acidic residues predominate over residues 491-511 (QEADLQRKQRKADTHRKMTEF).

Interacts with CHD4/Mi-2; the interaction is direct.

The protein resides in the nucleus. Functionally, transcription repressor that specifically binds the 5'-GGAG[GA]A[GA]A-3' consensus sequence. Represses transcription by recruiting the chromatin multiprotein complex NuRD to target promoters. Negatively regulates expression of EGFR, a gene involved in cell proliferation, survival and migration. Its ability to repress genes of the EGFR pathway suggest it may act as a tumor suppressor. This is Zinc finger CCCH-type with G patch domain-containing protein (Zgpat) from Mus musculus (Mouse).